A 279-amino-acid chain; its full sequence is F420-dependent methylenetetrahydromethanopterin dehydrogenase (279 aa).

This sequence belongs to the MTD family.

It catalyses the reaction 5,10-methylenetetrahydromethanopterin + oxidized coenzyme F420-(gamma-L-Glu)(n) + 2 H(+) = 5,10-methenyl-5,6,7,8-tetrahydromethanopterin + reduced coenzyme F420-(gamma-L-Glu)(n). It participates in one-carbon metabolism; methanogenesis from CO(2); 5,10-methylene-5,6,7,8-tetrahydromethanopterin from 5,10-methenyl-5,6,7,8-tetrahydromethanopterin (coenzyme F420 route): step 1/1. Its function is as follows. Catalyzes the reversible reduction of methenyl-H(4)MPT(+) to methylene-H(4)MPT. This chain is F420-dependent methylenetetrahydromethanopterin dehydrogenase (mtd), found in Methanosarcina acetivorans (strain ATCC 35395 / DSM 2834 / JCM 12185 / C2A).